Reading from the N-terminus, the 108-residue chain is Large ribosomal subunit protein uL23 (108 aa).

It belongs to the universal ribosomal protein uL23 family. In terms of assembly, part of the 50S ribosomal subunit. Contacts protein L29, and trigger factor when it is bound to the ribosome.

One of the early assembly proteins it binds 23S rRNA. One of the proteins that surrounds the polypeptide exit tunnel on the outside of the ribosome. Forms the main docking site for trigger factor binding to the ribosome. This is Large ribosomal subunit protein uL23 from Leptothrix cholodnii (strain ATCC 51168 / LMG 8142 / SP-6) (Leptothrix discophora (strain SP-6)).